The primary structure comprises 452 residues: Glycine receptor subunit alpha-2 (452 aa).

Residues 1–27 (MNRQLVNILTALFAFFLGTNHFREAFC) form the signal peptide. Over 28-256 (KDHDSRSGKH…KFHLERQMGY (229 aa)) the chain is Extracellular. N-linked (GlcNAc...) asparagine glycosylation occurs at Asn72. Arg99 contacts glycine. Residue Arg99 participates in strychnine binding. A glycan (N-linked (GlcNAc...) asparagine) is linked at Asn103. Residue Ser163 participates in glycine binding. Residues Cys172 and Cys186 are joined by a disulfide bond. Zn(2+)-binding residues include Glu226 and Glu228. Cys232 and Cys243 are oxidised to a cystine. Thr238 provides a ligand contact to glycine. A Zn(2+)-binding site is contributed by His249. A helical membrane pass occupies residues 257–278 (YLIQMYIPSLLIVILSWVSFWI). Topologically, residues 279–283 (NMDAA) are cytoplasmic. A helical membrane pass occupies residues 284–304 (PARVALGITTVLTMTTQSSGS). Topologically, residues 305–315 (RASLPKVSYVK) are extracellular. The chain crosses the membrane as a helical span at residues 316–336 (AIDIWMAVCLLFVFAALLEYA). Residues 337 to 420 (AVNFVSRQHK…FVDRAKRIDT (84 aa)) lie on the Cytoplasmic side of the membrane. A helical membrane pass occupies residues 421-441 (ISRAAFPLAFLIFNIFYWITY). Over 442–452 (KIIRHEDVHKK) the chain is Extracellular.

Belongs to the ligand-gated ion channel (TC 1.A.9) family. Glycine receptor (TC 1.A.9.3) subfamily. GLRA2 sub-subfamily. As to quaternary structure, interacts with GLRB. Heteropentamer composed of GLRA2 and GLRB; functional GLRB-GLRA2 heteropentamers contain four GLRA2 subunits and one GLRB subunit, although alternative subunit composition cannot be excluded. Homopentamer (in vitro). Both homopentamers and heteropentamers form functional ion channels, but their characteristics are subtly different.

It is found in the postsynaptic cell membrane. Its subcellular location is the synapse. It localises to the cell membrane. The protein localises to the cell projection. The catalysed reaction is chloride(in) = chloride(out). Channel opening is triggered by extracellular glycine. Channel opening is also triggered by taurine and beta-alanine. Inhibited by strychnine. Inhibited by picrotoxin. Subunit of heteromeric glycine-gated chloride channels. Plays a role in synaptic plasticity. Contributes to the generation of inhibitory postsynaptic currents, and is involved in the down-regulation of neuronal excitability. Plays a role in cellular responses to ethanol. This Rattus norvegicus (Rat) protein is Glycine receptor subunit alpha-2.